The following is a 335-amino-acid chain: Phospho-N-acetylmuramoyl-pentapeptide-transferase (335 aa).

10 helical membrane-spanning segments follow: residues 5–25 (IFLA…LMIP), 50–70 (TPTM…LIMA), 78–98 (MVMV…DDFI), 114–133 (LIGQ…RYLG), 145–165 (IHLE…VGIT), 177–197 (LAAG…TLAA), 200–220 (GGGV…AAAV), 236–256 (VFMG…LAVL), 262–282 (ILLI…LQVF), and 311–331 (VVMV…IAYM).

The protein belongs to the glycosyltransferase 4 family. MraY subfamily. Requires Mg(2+) as cofactor.

It localises to the cell membrane. It carries out the reaction UDP-N-acetyl-alpha-D-muramoyl-L-alanyl-gamma-D-glutamyl-meso-2,6-diaminopimeloyl-D-alanyl-D-alanine + di-trans,octa-cis-undecaprenyl phosphate = di-trans,octa-cis-undecaprenyl diphospho-N-acetyl-alpha-D-muramoyl-L-alanyl-D-glutamyl-meso-2,6-diaminopimeloyl-D-alanyl-D-alanine + UMP. Its pathway is cell wall biogenesis; peptidoglycan biosynthesis. In terms of biological role, catalyzes the initial step of the lipid cycle reactions in the biosynthesis of the cell wall peptidoglycan: transfers peptidoglycan precursor phospho-MurNAc-pentapeptide from UDP-MurNAc-pentapeptide onto the lipid carrier undecaprenyl phosphate, yielding undecaprenyl-pyrophosphoryl-MurNAc-pentapeptide, known as lipid I. The sequence is that of Phospho-N-acetylmuramoyl-pentapeptide-transferase from Desulfitobacterium hafniense (strain DSM 10664 / DCB-2).